A 260-amino-acid chain; its full sequence is Hydroxyethylthiazole kinase 1 (260 aa).

Residue M39 coordinates substrate. The ATP site is built by R115 and T160. G187 contributes to the substrate binding site.

The protein belongs to the Thz kinase family. Mg(2+) serves as cofactor.

It catalyses the reaction 5-(2-hydroxyethyl)-4-methylthiazole + ATP = 4-methyl-5-(2-phosphooxyethyl)-thiazole + ADP + H(+). It participates in cofactor biosynthesis; thiamine diphosphate biosynthesis; 4-methyl-5-(2-phosphoethyl)-thiazole from 5-(2-hydroxyethyl)-4-methylthiazole: step 1/1. In terms of biological role, catalyzes the phosphorylation of the hydroxyl group of 4-methyl-5-beta-hydroxyethylthiazole (THZ). The chain is Hydroxyethylthiazole kinase 1 from Streptococcus pneumoniae (strain JJA).